A 975-amino-acid polypeptide reads, in one-letter code: Nesprin-3 (975 aa).

The Cytoplasmic segment spans residues 1-925 (MTQQPQEDFE…PCSLLQKACR (925 aa)). Spectrin repeat units follow at residues 220-325 (QDHE…RLRG) and 647-740 (REHC…QALR). Residues 778–798 (LINPQDPIPRRQHGANPLEGH) are disordered. The region spanning 917–975 (CSLLQKACRVALPLQLLLLLFLLLLFLLPAGEEERSCALANNFARSFALMLRYNGPPPT) is the KASH domain. Residues 926-946 (VALPLQLLLLLFLLLLFLLPA) traverse the membrane as a helical; Anchor for type IV membrane protein segment. Over 947–975 (GEEERSCALANNFARSFALMLRYNGPPPT) the chain is Perinuclear space.

The protein belongs to the nesprin family. In terms of assembly, core component of LINC complexes which are composed of inner nuclear membrane SUN domain-containing proteins coupled to outer nuclear membrane KASH domain-containing nesprins. SUN and KASH domain-containing proteins seem to bind each other promiscuously; however, differentially expression of LINC complex constituents can give rise to specific assemblies. Interacts with SUN1 and SUN2; probably forming respective LINC complexes. Interacts with PLEC (via actin-binding domain). Interacts with DST. Interacts with SYNE1. Interacts (via KASH domain) with TOR1A (ATP-bound); the interaction is required for SYNE3 nuclear envelope localization. Post-translationally, the disulfid bond with SUN1 or SUN2 is required for stability of the respective LINC complex under tensile forces. In terms of tissue distribution, ubiquitous.

The protein localises to the nucleus outer membrane. The protein resides in the nucleus envelope. It is found in the rough endoplasmic reticulum. In terms of biological role, as a component of the LINC (LInker of Nucleoskeleton and Cytoskeleton) complex involved in the connection between the nuclear lamina and the cytoskeleton. The nucleocytoplasmic interactions established by the LINC complex play an important role in the transmission of mechanical forces across the nuclear envelope and in nuclear movement and positioning. Probable anchoring protein which tethers the nucleus to the cytoskeleton by binding PLEC which can associate with the intermediate filament system. Plays a role in the regulation of aortic epithelial cell morphology, and is required for flow-induced centrosome polarization and directional migration in aortic endothelial cells. The sequence is that of Nesprin-3 (Syne3) from Mus musculus (Mouse).